The primary structure comprises 62 residues: ATP synthase subunit K, mitochondrial (62 aa).

Residues 14 to 30 (HHLAIATIGTVVALVAP) traverse the membrane as a helical segment.

In terms of assembly, F-type ATP synthases have 2 components, the catalytic core F(1) and the membrane-embedded component F(0), linked together by a central stalk and a peripheral stalk. The central stalk, also called rotor shaft, is often seen as part of F(1). The peripheral stalk is seen as part of F(0). F(0) contains the membrane channel next to the rotor. F-type ATP synthases form dimers but each monomer functions independently in ATP generation. The dimer consists of 18 different polypeptides: ATP1 (subunit alpha, part of F(1), 3 molecules per monomer), ATP2 (subunit beta, part of F(1), 3 molecules per monomer), ATP3 (subunit gamma, part of the central stalk), ATP4 (subunit b, part of the peripheral stalk), ATP5/OSCP (subunit 5/OSCP, part of the peripheral stalk), ATP6 (subunit a, part of the peripheral stalk), ATP7 (subunit d, part of the peripheral stalk), ATP8 (subunit 8, part of the peripheral stalk), OLI1 (subunit c, part of the rotor, 10 molecules per monomer), ATP14 (subunit h, part of the peripheral stalk), ATP15 (subunit epsilon, part of the central stalk), ATP16 (subunit delta, part of the central stalk), ATP17 (subunit f, part of the peripheral stalk), ATP18 (subunit i/j, part of the peripheral stalk). Dimer-specific subunits are ATP19 (subunit k, at interface between monomers), ATP20 (subunit g, at interface between monomers), TIM11 (subunit e, at interface between monomers). Also contains subunit L.

It is found in the mitochondrion inner membrane. Mitochondrial membrane ATP synthase (F(1)F(0) ATP synthase or Complex V) produces ATP from ADP in the presence of a proton gradient across the membrane which is generated by electron transport complexes of the respiratory chain. F-type ATP synthases consist of two structural domains, F(1) - containing the extramembraneous catalytic core, and F(0) - containing the membrane proton channel, linked together by a central stalk and a peripheral stalk. During catalysis, ATP synthesis in the catalytic domain of F(1) is coupled via a rotary mechanism of the central stalk subunits to proton translocation. Part of the complex F(0) domain. Minor subunit located with subunit a/ATP6 in the membrane. The K chain binds the dimeric form by interacting with the G and E chains. This is ATP synthase subunit K, mitochondrial from Pichia angusta (Yeast).